The sequence spans 718 residues: Ribosomal RNA large subunit methyltransferase K/L (718 aa).

In terms of domain architecture, THUMP spans 44-155; that stretch reads DAYKVCIYSH…KQYVNVFLCL (112 aa).

This sequence belongs to the methyltransferase superfamily. RlmKL family.

It localises to the cytoplasm. It catalyses the reaction guanosine(2445) in 23S rRNA + S-adenosyl-L-methionine = N(2)-methylguanosine(2445) in 23S rRNA + S-adenosyl-L-homocysteine + H(+). The catalysed reaction is guanosine(2069) in 23S rRNA + S-adenosyl-L-methionine = N(2)-methylguanosine(2069) in 23S rRNA + S-adenosyl-L-homocysteine + H(+). Its function is as follows. Specifically methylates the guanine in position 2445 (m2G2445) and the guanine in position 2069 (m7G2069) of 23S rRNA. The chain is Ribosomal RNA large subunit methyltransferase K/L from Francisella philomiragia subsp. philomiragia (strain ATCC 25017 / CCUG 19701 / FSC 153 / O#319-036).